We begin with the raw amino-acid sequence, 351 residues long: Protein RecA (351 aa).

64–71 (GPESSGKT) contacts ATP. A disordered region spans residues 330-351 (DRFLQNGGPDPDDGDGDATAEM). Residues 339–351 (DPDDGDGDATAEM) are compositionally biased toward acidic residues.

The protein belongs to the RecA family.

The protein localises to the cytoplasm. Its function is as follows. Can catalyze the hydrolysis of ATP in the presence of single-stranded DNA, the ATP-dependent uptake of single-stranded DNA by duplex DNA, and the ATP-dependent hybridization of homologous single-stranded DNAs. It interacts with LexA causing its activation and leading to its autocatalytic cleavage. The polypeptide is Protein RecA (Rhizobium leguminosarum bv. viciae).